A 108-amino-acid polypeptide reads, in one-letter code: UPF0060 membrane protein YnfA (108 aa).

The Periplasmic segment spans residues 1–5 (MIKTT). A helical transmembrane segment spans residues 6 to 26 (LLFFATALCEIIGCFLPWLWL). At 27 to 30 (KRNA) the chain is on the cytoplasmic side. A helical membrane pass occupies residues 31–51 (SIWLLLPAGISLALFVWLLTL). At 52-60 (HPAASGRVY) the chain is on the periplasmic side. The chain crosses the membrane as a helical span at residues 61–81 (AAYGGVYVCTALIWLRVVDGV). The Cytoplasmic portion of the chain corresponds to 82-84 (KLS). The helical transmembrane segment at 85–105 (LYDWTGALIALCGMLIIVAGW) threads the bilayer. Residues 106 to 108 (GRT) are Periplasmic-facing.

This sequence belongs to the UPF0060 family.

It localises to the cell inner membrane. This Escherichia coli (strain SMS-3-5 / SECEC) protein is UPF0060 membrane protein YnfA.